Consider the following 206-residue polypeptide: Large ribosomal subunit protein uL3 (206 aa).

Residues 127–151 (SGGPSSHGSKFHRHLGGTGQATTPA) are disordered.

The protein belongs to the universal ribosomal protein uL3 family. As to quaternary structure, part of the 50S ribosomal subunit. Forms a cluster with proteins L14 and L19.

One of the primary rRNA binding proteins, it binds directly near the 3'-end of the 23S rRNA, where it nucleates assembly of the 50S subunit. The chain is Large ribosomal subunit protein uL3 from Borreliella afzelii (strain PKo) (Borrelia afzelii).